We begin with the raw amino-acid sequence, 134 residues long: Probable glycine cleavage system H protein (134 aa).

Residues 29-110 (TVLVGITDYA…PYGAWIAKIK (82 aa)) form the Lipoyl-binding domain. Position 70 is an N6-lipoyllysine (Lys70).

It belongs to the GcvH family. The glycine cleavage system is composed of four proteins: P, T, L and H. Requires (R)-lipoate as cofactor.

The glycine cleavage system catalyzes the degradation of glycine. The H protein shuttles the methylamine group of glycine from the P protein to the T protein. This chain is Probable glycine cleavage system H protein, found in Pyrococcus abyssi (strain GE5 / Orsay).